The following is a 439-amino-acid chain: NAD kinase (439 aa).

Serine 46, serine 48, serine 50, serine 55, and serine 64 each carry phosphoserine.

This sequence belongs to the NAD kinase family. A divalent metal cation serves as cofactor.

It catalyses the reaction NAD(+) + ATP = ADP + NADP(+) + H(+). The polypeptide is NAD kinase (Nadk) (Mus musculus (Mouse)).